The sequence spans 463 residues: UDP-glucosyltransferase A1 (463 aa).

Belongs to the UDP-glycosyltransferase family.

It catalyses the reaction 18-hydroxy-(9Z)-octadecenoate + UDP-alpha-D-glucose = (9Z)-18-hydroxyoctadec-9-enoate 18-O-beta-D-glucoside + UDP + H(+). The enzyme catalyses 17-hydroxy-(9Z)-octadecenoate + UDP-alpha-D-glucose = (9Z)-17-hydroxyoctadec-9-enoate 17-O-beta-D-glucoside + UDP + H(+). Functionally, catalyzes the first glycosylation step of sophorolipid biosynthesis, the coupling of glucose to a hydroxylated fatty acid to give rise to a glucolipid. Can glycosylate all hydroxyl fatty acids generated by cytochrome P450 monooxygenases CYP52M1, CYP52N1 and CYP52E3 into their corresponding glucolipids. Main products are 17-O- and 18-O-(beta-D-glucopyranosyl)-octadecenoic acids. The chain is UDP-glucosyltransferase A1 from Starmerella bombicola (Yeast).